Reading from the N-terminus, the 134-residue chain is Small ribosomal subunit protein uS8c (134 aa).

The protein belongs to the universal ribosomal protein uS8 family. Part of the 30S ribosomal subunit.

The protein localises to the plastid. It is found in the chloroplast. One of the primary rRNA binding proteins, it binds directly to 16S rRNA central domain where it helps coordinate assembly of the platform of the 30S subunit. The chain is Small ribosomal subunit protein uS8c (rps8) from Helianthus annuus (Common sunflower).